The primary structure comprises 516 residues: Putative fatty acyl-CoA reductase CG8306 (516 aa).

3 helical membrane-spanning segments follow: residues 356–376 (WVFRLSAILFHFIPAIILDLV), 471–491 (ILLGLHVALQLSFWYGVFKLI), and 496–516 (GISTAKAALVLPVLYYLFGLL).

Belongs to the fatty acyl-CoA reductase family.

The protein resides in the membrane. The catalysed reaction is a long-chain fatty acyl-CoA + 2 NADPH + 2 H(+) = a long-chain primary fatty alcohol + 2 NADP(+) + CoA. In terms of biological role, catalyzes the reduction of C16 or C18 fatty acyl-CoA to fatty alcohols. This chain is Putative fatty acyl-CoA reductase CG8306, found in Drosophila melanogaster (Fruit fly).